The chain runs to 440 residues: L-seryl-tRNA(Sec) selenium transferase (440 aa).

Residue Lys-282 is modified to N6-(pyridoxal phosphate)lysine.

It belongs to the SelA family. Requires pyridoxal 5'-phosphate as cofactor.

It is found in the cytoplasm. It carries out the reaction L-seryl-tRNA(Sec) + selenophosphate + H(+) = L-selenocysteinyl-tRNA(Sec) + phosphate. It participates in aminoacyl-tRNA biosynthesis; selenocysteinyl-tRNA(Sec) biosynthesis; selenocysteinyl-tRNA(Sec) from L-seryl-tRNA(Sec) (bacterial route): step 1/1. Its function is as follows. Converts seryl-tRNA(Sec) to selenocysteinyl-tRNA(Sec) required for selenoprotein biosynthesis. This Campylobacter jejuni subsp. jejuni serotype O:6 (strain 81116 / NCTC 11828) protein is L-seryl-tRNA(Sec) selenium transferase.